The primary structure comprises 53 residues: Cytochrome c oxidase subunit 7e (53 aa).

Slime mold cytochrome c oxidase consists of at least seven different polypeptides species, subunits I, II, III, IV, V, VI, and VIIe/s in order of MW.

Its subcellular location is the mitochondrion inner membrane. The catalysed reaction is 4 Fe(II)-[cytochrome c] + O2 + 8 H(+)(in) = 4 Fe(III)-[cytochrome c] + 2 H2O + 4 H(+)(out). Functionally, this protein is one of the nuclear-coded polypeptide chains of cytochrome c oxidase, the terminal oxidase in mitochondrial electron transport. The sequence is that of Cytochrome c oxidase subunit 7e (cxgE) from Dictyostelium discoideum (Social amoeba).